A 206-amino-acid polypeptide reads, in one-letter code: Large ribosomal subunit protein uL4 (206 aa).

Residues 42–54 (RRQQGTHQSQGRS) are compositionally biased toward polar residues. Positions 42–94 (RRQQGTHQSQGRSDVSRTGAKMFKQKGTGRARHSSARAPQFRGGGKAHGPVFR) are disordered. Residues 64–76 (FKQKGTGRARHSS) show a composition bias toward basic residues.

This sequence belongs to the universal ribosomal protein uL4 family. As to quaternary structure, part of the 50S ribosomal subunit.

Its function is as follows. One of the primary rRNA binding proteins, this protein initially binds near the 5'-end of the 23S rRNA. It is important during the early stages of 50S assembly. It makes multiple contacts with different domains of the 23S rRNA in the assembled 50S subunit and ribosome. Forms part of the polypeptide exit tunnel. This Bartonella tribocorum (strain CIP 105476 / IBS 506) protein is Large ribosomal subunit protein uL4.